The primary structure comprises 230 residues: 2,3-bisphosphoglycerate-dependent phosphoglycerate mutase (230 aa).

Substrate contacts are provided by residues 8-15 (RHGESEWN), 21-22 (TG), Arg-60, 87-90 (ERHY), Lys-98, 114-115 (RR), and 183-184 (GN). His-9 serves as the catalytic Tele-phosphohistidine intermediate. The Proton donor/acceptor role is filled by Glu-87.

This sequence belongs to the phosphoglycerate mutase family. BPG-dependent PGAM subfamily.

The catalysed reaction is (2R)-2-phosphoglycerate = (2R)-3-phosphoglycerate. The protein operates within carbohydrate degradation; glycolysis; pyruvate from D-glyceraldehyde 3-phosphate: step 3/5. Its function is as follows. Catalyzes the interconversion of 2-phosphoglycerate and 3-phosphoglycerate. The polypeptide is 2,3-bisphosphoglycerate-dependent phosphoglycerate mutase (Streptococcus agalactiae serotype Ia (strain ATCC 27591 / A909 / CDC SS700)).